The primary structure comprises 329 residues: Vacuolar protein sorting-associated protein 26B-like (329 aa).

Belongs to the VPS26 family.

The protein resides in the cytoplasm. It localises to the membrane. Its function is as follows. Probable component of the retromer complex, a complex required to retrieve lysosomal enzyme receptors (IGF2R and M6PR) from endosomes to the trans-Golgi network. In Danio rerio (Zebrafish), this protein is Vacuolar protein sorting-associated protein 26B-like (vps26bl).